We begin with the raw amino-acid sequence, 186 residues long: Quinone reductase (186 aa).

Residues 13-20 (SLRKESYN), 80-83 (EHNR), and serine 116 each bind FMN.

It belongs to the SsuE family. As to quaternary structure, homotetramer. Dimer of dimers. The tetrameric configuration has a central role in chromate reductase activity. Requires FMN as cofactor.

It catalyses the reaction a quinone + NADH + H(+) = a quinol + NAD(+). It carries out the reaction a quinone + NADPH + H(+) = a quinol + NADP(+). The catalysed reaction is Cr(6+) + 2 NADH + O2 = Cr(3+) + superoxide + 2 NAD(+) + 2 H(+). The enzyme catalyses Cr(6+) + 2 NADPH + O2 = Cr(3+) + superoxide + 2 NADP(+) + 2 H(+). Non-competitively inhibited by sulfate. Functionally, catalyzes the reduction of quinones. Acts by simultaneous two-electron transfer, avoiding formation of highly reactive semiquinone intermediates and producing quinols that promote tolerance of H(2)O(2). Quinone reduction is probably the primary biological role of ChrR. Can also reduce toxic chromate to insoluble and less toxic Cr(3+). Catalyzes the transfer of three electrons to Cr(6+) producing Cr(3+) and one electron to molecular oxygen. This reaction produces transiently a minimal amount of the toxic Cr(5+) species and reactive oxygen species (ROS). Chromate reduction protects the cell against chromate toxicity, but is likely a secondary activity. The sequence is that of Quinone reductase (chrR) from Pseudomonas putida (Arthrobacter siderocapsulatus).